A 339-amino-acid chain; its full sequence is Phosphatidylglycerol--prolipoprotein diacylglyceryl transferase (339 aa).

3 consecutive transmembrane segments (helical) span residues 43 to 63, 81 to 101, and 121 to 141; these read FTIA…YWLG, ILWM…LTSW, and NGGI…IYFA. A 1,2-diacyl-sn-glycero-3-phospho-(1'-sn-glycerol) is bound at residue Arg-167. 2 helical membrane passes run 231-251 and 300-320; these read FTQL…YFWL and LWTD…WMLW.

This sequence belongs to the Lgt family.

The protein resides in the cell membrane. The enzyme catalyses L-cysteinyl-[prolipoprotein] + a 1,2-diacyl-sn-glycero-3-phospho-(1'-sn-glycerol) = an S-1,2-diacyl-sn-glyceryl-L-cysteinyl-[prolipoprotein] + sn-glycerol 1-phosphate + H(+). The protein operates within protein modification; lipoprotein biosynthesis (diacylglyceryl transfer). Functionally, catalyzes the transfer of the diacylglyceryl group from phosphatidylglycerol to the sulfhydryl group of the N-terminal cysteine of a prolipoprotein, the first step in the formation of mature lipoproteins. The chain is Phosphatidylglycerol--prolipoprotein diacylglyceryl transferase from Deinococcus radiodurans (strain ATCC 13939 / DSM 20539 / JCM 16871 / CCUG 27074 / LMG 4051 / NBRC 15346 / NCIMB 9279 / VKM B-1422 / R1).